The sequence spans 199 residues: Small ribosomal subunit protein uS7 (199 aa).

It belongs to the universal ribosomal protein uS7 family. In terms of assembly, part of the 30S ribosomal subunit.

Functionally, one of the primary rRNA binding proteins, it binds directly to 16S rRNA where it nucleates assembly of the head domain of the 30S subunit. Is located at the subunit interface close to the decoding center. The chain is Small ribosomal subunit protein uS7 from Cenarchaeum symbiosum (strain A).